The chain runs to 317 residues: Acetyl-coenzyme A carboxylase carboxyl transferase subunit alpha (317 aa).

The region spanning 40 to 293 (LEKRSADALK…GDIIAASLRS (254 aa)) is the CoA carboxyltransferase C-terminal domain.

This sequence belongs to the AccA family. Acetyl-CoA carboxylase is a heterohexamer composed of biotin carboxyl carrier protein (AccB), biotin carboxylase (AccC) and two subunits each of ACCase subunit alpha (AccA) and ACCase subunit beta (AccD).

The protein localises to the cytoplasm. It catalyses the reaction N(6)-carboxybiotinyl-L-lysyl-[protein] + acetyl-CoA = N(6)-biotinyl-L-lysyl-[protein] + malonyl-CoA. Its pathway is lipid metabolism; malonyl-CoA biosynthesis; malonyl-CoA from acetyl-CoA: step 1/1. Functionally, component of the acetyl coenzyme A carboxylase (ACC) complex. First, biotin carboxylase catalyzes the carboxylation of biotin on its carrier protein (BCCP) and then the CO(2) group is transferred by the carboxyltransferase to acetyl-CoA to form malonyl-CoA. The sequence is that of Acetyl-coenzyme A carboxylase carboxyl transferase subunit alpha from Brucella abortus (strain S19).